The chain runs to 344 residues: Ureide permease 3 (344 aa).

The Extracellular segment spans residues 1-10; sequence MYVIESKGGT. The chain crosses the membrane as a helical span at residues 11–31; it reads ITCMLLALLFLGTWPAIMTLT. The Cytoplasmic portion of the chain corresponds to 32–42; it reads ERRGRLPQHTY. The chain crosses the membrane as a helical span at residues 43 to 63; that stretch reads LDYTLTNLLAAVIIAFTLGEI. Topologically, residues 64-78 are extracellular; it reads SPSRPNFTTQLSQDN. A helical transmembrane segment spans residues 79–99; that stretch reads WPSVMFAMAGGIFLSLGTLAT. At 100-101 the chain is on the cytoplasmic side; the sequence is QY. The chain crosses the membrane as a helical span at residues 102–122; that stretch reads AWAFVGLSVTEVITASIAVVI. Over 123-136 the chain is Extracellular; that stretch reads GTTLNYFLDDRINR. Residues 137-157 form a helical membrane-spanning segment; that stretch reads AEVLFPGVACFLIAVCFGSAV. Over 158–208 the chain is Cytoplasmic; that stretch reads HKSNAADNKSKLQGFKSLETTSSFQMETSSIKEGKAKVGTADFLIEVEKQR. ATP is bound at residue 209-216; sequence AIKVFGKS. The chain crosses the membrane as a helical span at residues 209-229; the sequence is AIKVFGKSTIIGLAITFFAVP. Residues 230 to 235 lie on the Extracellular side of the membrane; it reads KLNVYT. Residues 236–256 traverse the membrane as a helical segment; it reads AFFYFSISSFGVGLILNIIFL. Over 257–278 the chain is Cytoplasmic; that stretch reads YWPILGLPRSSFKAYLNDWNGR. The helical transmembrane segment at 279–299 threads the bilayer; sequence GWSFLAGFLCGFGNGLQFMGG. The Extracellular portion of the chain corresponds to 300–344; it reads QAAGYAAAGAVQIENKHFGGYCCLENTKDHQEKHIHFLSVCYLCS.

Belongs to the plant ureide permease (TC 2.A.7.19) family.

It is found in the membrane. Proton-coupled transporter that transports a wide spectrum of oxo derivatives of heterocyclic nitrogen compounds. In Arabidopsis thaliana (Mouse-ear cress), this protein is Ureide permease 3.